We begin with the raw amino-acid sequence, 1466 residues long: Immediate-early protein 2 (1466 aa).

Disordered regions lie at residues 1-21, 223-242, 339-370, 428-472, 517-965, 1005-1068, 1086-1179, and 1191-1223; these read MEPA…MQDY, NRGY…GGNG, YNHP…RGNQ, RCRS…VTKA, RSKT…TSIN, FRPH…CRSN, SRTR…SENA, and TTSH…DSSI. Over residues 339–350 the composition is skewed to polar residues; that stretch reads YNHPTKAQTIPE. The span at 428-437 shows a compositional bias: basic residues; that stretch reads RCRSVQKKKE. Composition is skewed to basic and acidic residues over residues 443–472 and 536–553; these read NKHD…VTKA and PTKD…DNYP. 2 stretches are compositionally biased toward polar residues: residues 583–595 and 640–665; these read KNVS…TSPK and KNHT…PTAF. Over residues 666-681 the composition is skewed to low complexity; sequence NKSNNNKSITNSTSNS. Residues 696–713 are compositionally biased toward basic and acidic residues; sequence NESKDPNRTCGKNSDKHL. 2 stretches are compositionally biased toward low complexity: residues 720–756 and 763–772; these read ASKR…SSRA and RASSRAPSRA. A compositionally biased stretch (basic and acidic residues) spans 773–790; sequence SSRDSSRASSRDSSRDSN. Over residues 791 to 800 the composition is skewed to low complexity; sequence RASSKASSRA. A compositionally biased stretch (basic and acidic residues) spans 801–814; sequence SSRDSSRASSRDSS. 2 stretches are compositionally biased toward low complexity: residues 826–884 and 926–940; these read SRAS…SSRA. Residues 955–965 are compositionally biased toward polar residues; sequence RQTPPHDTSIN. The segment at 989 to 1037 is interaction with human UBE2I; that stretch reads ARLQCFNHNDQFYNPRFRPHIRTNRKKSESTNDTDSESSMSRCKSHCRN. Composition is skewed to low complexity over residues 1019–1029, 1053–1068, and 1086–1110; these read TNDTDSESSMS, GSSS…CRSN, and SRTR…STLK. The span at 1116 to 1131 shows a compositional bias: basic and acidic residues; it reads QNRDNKQIKSKSDSKH. The span at 1162–1177 shows a compositional bias: polar residues; the sequence is HNSSPFNTHEQSNHSE. Positions 1195–1213 are enriched in basic residues; the sequence is LHQKQNVKLHNTKKCKKKR.

Belongs to the herpesviridae IE2 family. As to quaternary structure, interacts with human UBE2I in the nucleus. Although this interaction does not promote IE2 sumoylation, it represses transactivation activity.

It localises to the host nucleus. In terms of biological role, transcriptional transactivator. The chain is Immediate-early protein 2 (U90/U86) from Homo sapiens (Human).